A 223-amino-acid chain; its full sequence is Deoxyribose-phosphate aldolase (223 aa).

Asp-91 serves as the catalytic Proton donor/acceptor. Residue Lys-153 is the Schiff-base intermediate with acetaldehyde of the active site. Lys-182 (proton donor/acceptor) is an active-site residue.

The protein belongs to the DeoC/FbaB aldolase family. DeoC type 1 subfamily.

It is found in the cytoplasm. It carries out the reaction 2-deoxy-D-ribose 5-phosphate = D-glyceraldehyde 3-phosphate + acetaldehyde. The protein operates within carbohydrate degradation; 2-deoxy-D-ribose 1-phosphate degradation; D-glyceraldehyde 3-phosphate and acetaldehyde from 2-deoxy-alpha-D-ribose 1-phosphate: step 2/2. Functionally, catalyzes a reversible aldol reaction between acetaldehyde and D-glyceraldehyde 3-phosphate to generate 2-deoxy-D-ribose 5-phosphate. The chain is Deoxyribose-phosphate aldolase from Yersinia pestis bv. Antiqua (strain Angola).